A 285-amino-acid chain; its full sequence is MLFNAVHNSLPPNIDIDHAILRGEDHPPTCAKCVARVRISALGSLDLRYHSLRCYAAPPDVGRCEFVPPRRRVLIANQGLDVSRLPPTGTVTLLLADVEESTHLWQMCPEDMATAIAHLDHTVSEAITNHGGVQPVKRYEGDSFVAAFTRASDAAACALDLQRTSLAPIRLRIGLHTGEVQLRDELYVGPTINRTARLRDLAHGGQVVLSAATGDLVTGRLPADAWLVDLGRHPLRGLPRPEWVMQLCHPDIREKFPPLRTAKSSPTSILPAQFTTFVGRRAQIS.

The region spanning 92–199 is the Guanylate cyclase domain; the sequence is TLLLADVEES…PTINRTARLR (108 aa).

The protein belongs to the adenylyl cyclase class-4/guanylyl cyclase family.

This is an uncharacterized protein from Mycobacterium tuberculosis (strain ATCC 25618 / H37Rv).